Here is a 210-residue protein sequence, read N- to C-terminus: dTTP/UTP pyrophosphatase (210 aa).

The Proton acceptor role is filled by aspartate 85.

Belongs to the Maf family. YhdE subfamily. The cofactor is a divalent metal cation.

Its subcellular location is the cytoplasm. It catalyses the reaction dTTP + H2O = dTMP + diphosphate + H(+). It carries out the reaction UTP + H2O = UMP + diphosphate + H(+). In terms of biological role, nucleoside triphosphate pyrophosphatase that hydrolyzes dTTP and UTP. May have a dual role in cell division arrest and in preventing the incorporation of modified nucleotides into cellular nucleic acids. This chain is dTTP/UTP pyrophosphatase, found in Saccharophagus degradans (strain 2-40 / ATCC 43961 / DSM 17024).